Reading from the N-terminus, the 202-residue chain is Imidazoleglycerol-phosphate dehydratase (202 aa).

This sequence belongs to the imidazoleglycerol-phosphate dehydratase family.

The protein localises to the cytoplasm. It catalyses the reaction D-erythro-1-(imidazol-4-yl)glycerol 3-phosphate = 3-(imidazol-4-yl)-2-oxopropyl phosphate + H2O. It participates in amino-acid biosynthesis; L-histidine biosynthesis; L-histidine from 5-phospho-alpha-D-ribose 1-diphosphate: step 6/9. The polypeptide is Imidazoleglycerol-phosphate dehydratase (Clavibacter michiganensis subsp. michiganensis (strain NCPPB 382)).